The chain runs to 214 residues: CASP-like protein 0U1 (214 aa).

Over 1 to 82 (MATSEAPLLK…GFTSFYQFKG (82 aa)) the chain is Cytoplasmic. A helical transmembrane segment spans residues 83 to 103 (VVGVYAAFWVYTVLLIGLYLF). Residues 104–112 (SRGPPPGTE) lie on the Extracellular side of the membrane. Residues 113-133 (FVVHALFTLCMIAFVSLSVIS) traverse the membrane as a helical segment. Topologically, residues 134 to 153 (CTSTVIESDYSVCKNAAYAK) are cytoplasmic. A helical membrane pass occupies residues 154–174 (ASLVFAALVVVLNCATCAFVF). The Extracellular portion of the chain corresponds to 175–214 (KQWRSLQFVGMPENFRPFGRHRHKHGHHAGDADDAIPTHP). Residues 194 to 214 (RHRHKHGHHAGDADDAIPTHP) form a disordered region.

It belongs to the Casparian strip membrane proteins (CASP) family. In terms of assembly, homodimer and heterodimers.

It localises to the cell membrane. This chain is CASP-like protein 0U1, found in Ostreococcus tauri.